Reading from the N-terminus, the 422-residue chain is Tyrosine--tRNA ligase (422 aa).

Tyrosine 36 contributes to the L-tyrosine binding site. The 'HIGH' region motif lies at 41 to 50; that stretch reads PTAGSLHIGH. L-tyrosine is bound by residues tyrosine 174 and glutamine 178. A 'KMSKS' region motif is present at residues 234-238; it reads KFGKT. Lysine 237 is a binding site for ATP. Positions 356 to 420 constitute an S4 RNA-binding domain; sequence TDLVTLLVES…GKKQYRLVTW (65 aa).

Belongs to the class-I aminoacyl-tRNA synthetase family. TyrS type 1 subfamily. Homodimer.

It is found in the cytoplasm. It carries out the reaction tRNA(Tyr) + L-tyrosine + ATP = L-tyrosyl-tRNA(Tyr) + AMP + diphosphate + H(+). Functionally, catalyzes the attachment of tyrosine to tRNA(Tyr) in a two-step reaction: tyrosine is first activated by ATP to form Tyr-AMP and then transferred to the acceptor end of tRNA(Tyr). This chain is Tyrosine--tRNA ligase, found in Aeromonas hydrophila subsp. hydrophila (strain ATCC 7966 / DSM 30187 / BCRC 13018 / CCUG 14551 / JCM 1027 / KCTC 2358 / NCIMB 9240 / NCTC 8049).